Consider the following 317-residue polypeptide: Protoheme IX farnesyltransferase (317 aa).

6 helical membrane-spanning segments follow: residues 25–45, 54–74, 117–137, 167–189, 244–264, and 281–301; these read FFALLKPRVMALVVFTALVGM, PVIGAVSLLMIAVGAGASGCL, LMLGLAANWLAAGLLAFTIVF, IGQAVVTGSVGIEGIILFLIIFI, LGFGGLIYGLVALLGGLAMLV, and AAMSLFGFSILYLFLLFSALL.

It belongs to the UbiA prenyltransferase family. Protoheme IX farnesyltransferase subfamily.

The protein localises to the cell inner membrane. It catalyses the reaction heme b + (2E,6E)-farnesyl diphosphate + H2O = Fe(II)-heme o + diphosphate. It functions in the pathway porphyrin-containing compound metabolism; heme O biosynthesis; heme O from protoheme: step 1/1. Converts heme B (protoheme IX) to heme O by substitution of the vinyl group on carbon 2 of heme B porphyrin ring with a hydroxyethyl farnesyl side group. The sequence is that of Protoheme IX farnesyltransferase from Methylobacterium nodulans (strain LMG 21967 / CNCM I-2342 / ORS 2060).